The following is a 283-amino-acid chain: Nucleotide-binding protein ACIAD3059 (283 aa).

Residue 9–16 participates in ATP binding; it reads GQSGSGKS. GTP is bound at residue 59–62; the sequence is DVRS.

This sequence belongs to the RapZ-like family.

Displays ATPase and GTPase activities. The sequence is that of Nucleotide-binding protein ACIAD3059 from Acinetobacter baylyi (strain ATCC 33305 / BD413 / ADP1).